A 1378-amino-acid chain; its full sequence is DNA-directed RNA polymerase subunit beta (1378 aa).

It belongs to the RNA polymerase beta chain family. As to quaternary structure, the RNAP catalytic core consists of 2 alpha, 1 beta, 1 beta' and 1 omega subunit. When a sigma factor is associated with the core the holoenzyme is formed, which can initiate transcription.

It carries out the reaction RNA(n) + a ribonucleoside 5'-triphosphate = RNA(n+1) + diphosphate. Its function is as follows. DNA-dependent RNA polymerase catalyzes the transcription of DNA into RNA using the four ribonucleoside triphosphates as substrates. The polypeptide is DNA-directed RNA polymerase subunit beta (Campylobacter jejuni (strain RM1221)).